The primary structure comprises 367 residues: MDTRAKDPASRPRLLVAASGTGGHIFPALAVAEQLPDWQIEWLGVPDRMEGKLVRERYPLHRVVMSGWQGSPLHRLQALAQLARATLQVRRLLMSGRFDIVLTTGGYIAAPAILAARSLGVPVLLHESNWIPGKVTRWLGRFCQVVALGMAETAEHLPGVAAQVVGTPVRAEFYTPQPFPADLPIPDGDPLIVVMGGSQGARGLNRMVATCAPAWLEAGAWIVHLTGGSEAQDPEARIPSHPRYRPFPFRRDVAALLQRANFAISRAGAMSLAELLTTATPAILIPYPFAAEDHQYQNALAFVGRGGGVVMRESEENLDLLRQTVLTWLAQPQVVAQMAARLQAAAPPNASKVLARLLQEIRQSSAR.

UDP-N-acetyl-alpha-D-glucosamine contacts are provided by residues 21–23 (TGG), Asn-129, Arg-170, Ser-198, and Gln-295.

Belongs to the glycosyltransferase 28 family. MurG subfamily.

Its subcellular location is the cell inner membrane. The catalysed reaction is di-trans,octa-cis-undecaprenyl diphospho-N-acetyl-alpha-D-muramoyl-L-alanyl-D-glutamyl-meso-2,6-diaminopimeloyl-D-alanyl-D-alanine + UDP-N-acetyl-alpha-D-glucosamine = di-trans,octa-cis-undecaprenyl diphospho-[N-acetyl-alpha-D-glucosaminyl-(1-&gt;4)]-N-acetyl-alpha-D-muramoyl-L-alanyl-D-glutamyl-meso-2,6-diaminopimeloyl-D-alanyl-D-alanine + UDP + H(+). Its pathway is cell wall biogenesis; peptidoglycan biosynthesis. Cell wall formation. Catalyzes the transfer of a GlcNAc subunit on undecaprenyl-pyrophosphoryl-MurNAc-pentapeptide (lipid intermediate I) to form undecaprenyl-pyrophosphoryl-MurNAc-(pentapeptide)GlcNAc (lipid intermediate II). The polypeptide is UDP-N-acetylglucosamine--N-acetylmuramyl-(pentapeptide) pyrophosphoryl-undecaprenol N-acetylglucosamine transferase (Synechococcus sp. (strain JA-2-3B'a(2-13)) (Cyanobacteria bacterium Yellowstone B-Prime)).